The primary structure comprises 253 residues: Probable transcriptional regulatory protein TM_0466 (253 aa).

The protein belongs to the TACO1 family.

The protein localises to the cytoplasm. The sequence is that of Probable transcriptional regulatory protein TM_0466 from Thermotoga maritima (strain ATCC 43589 / DSM 3109 / JCM 10099 / NBRC 100826 / MSB8).